A 618-amino-acid chain; its full sequence is Poly(A)-specific ribonuclease PARN-like (618 aa).

A divalent metal cation-binding residues include Ser54, Gln56, Asp332, and Asn418. Residues 588-607 form a disordered region; that stretch reads ALESSDTDPDSDTKPSEIDW.

The protein belongs to the CAF1 family. A divalent metal cation is required as a cofactor.

The protein resides in the nucleus. Its subcellular location is the cytoplasm. The enzyme catalyses Exonucleolytic cleavage of poly(A) to 5'-AMP.. Functionally, 3'-exoribonuclease that has a preference for poly(A) tails of mRNAs, thereby efficiently degrading poly(A) tails. Exonucleolytic degradation of the poly(A) tail is often the first step in the decay of eukaryotic mRNAs. The protein is Poly(A)-specific ribonuclease PARN-like of Arabidopsis thaliana (Mouse-ear cress).